We begin with the raw amino-acid sequence, 307 residues long: Elongation factor Ts (307 aa).

An involved in Mg(2+) ion dislocation from EF-Tu region spans residues 80–83 (TDFV).

This sequence belongs to the EF-Ts family.

The protein resides in the cytoplasm. Associates with the EF-Tu.GDP complex and induces the exchange of GDP to GTP. It remains bound to the aminoacyl-tRNA.EF-Tu.GTP complex up to the GTP hydrolysis stage on the ribosome. The sequence is that of Elongation factor Ts (tsf) from Zymomonas mobilis subsp. mobilis (strain ATCC 31821 / ZM4 / CP4).